We begin with the raw amino-acid sequence, 164 residues long: MIDYSGLRTIFGEKLPESHIFFATVAAHKYVPSYAFLRRELGLSSAHTNRKVWKKFVEAYGKAIPPAPPAPPLTLSKDLTASMSVEEGAALTLSVTATGGTGPYTYAWTKDGSPIPDASGATYTKPTAAAEDAGSYKVTVTDSKQVSKDSTTCAVTVNPTVPGG.

The binding to the capsid hexamer stretch occupies residues 1 to 72; it reads MIDYSGLRTI…AIPPAPPAPP (72 aa). In terms of domain architecture, Ig-like spans 71 to 164; that stretch reads PPLTLSKDLT…VTVNPTVPGG (94 aa).

As to quaternary structure, interacts with the major capsid protein; each hexon binds a single copy of the decoration protein.

The protein resides in the virion. In terms of biological role, decoration protein that binds asymmetrically to the center of each capsid protein hexamer after capsid expansion. Stabilizes the capsid and protects from DNA release. In Escherichia phage T5 (Enterobacteria phage T5), this protein is Decoration protein.